Reading from the N-terminus, the 131-residue chain is Small ribosomal subunit protein uS8 (131 aa).

Belongs to the universal ribosomal protein uS8 family. Part of the 30S ribosomal subunit. Contacts proteins S5 and S12.

In terms of biological role, one of the primary rRNA binding proteins, it binds directly to 16S rRNA central domain where it helps coordinate assembly of the platform of the 30S subunit. The protein is Small ribosomal subunit protein uS8 of Acidovorax sp. (strain JS42).